The primary structure comprises 249 residues: Probable transcriptional regulatory protein Minf_0651 (249 aa).

Belongs to the TACO1 family.

The protein resides in the cytoplasm. In Methylacidiphilum infernorum (isolate V4) (Methylokorus infernorum (strain V4)), this protein is Probable transcriptional regulatory protein Minf_0651.